We begin with the raw amino-acid sequence, 243 residues long: 1-(5-phosphoribosyl)-5-[(5-phosphoribosylamino)methylideneamino] imidazole-4-carboxamide isomerase (243 aa).

Asp-8 (proton acceptor) is an active-site residue. Asp-130 (proton donor) is an active-site residue.

It belongs to the HisA/HisF family.

It is found in the cytoplasm. It carries out the reaction 1-(5-phospho-beta-D-ribosyl)-5-[(5-phospho-beta-D-ribosylamino)methylideneamino]imidazole-4-carboxamide = 5-[(5-phospho-1-deoxy-D-ribulos-1-ylimino)methylamino]-1-(5-phospho-beta-D-ribosyl)imidazole-4-carboxamide. It participates in amino-acid biosynthesis; L-histidine biosynthesis; L-histidine from 5-phospho-alpha-D-ribose 1-diphosphate: step 4/9. The chain is 1-(5-phosphoribosyl)-5-[(5-phosphoribosylamino)methylideneamino] imidazole-4-carboxamide isomerase from Cellvibrio japonicus (strain Ueda107) (Pseudomonas fluorescens subsp. cellulosa).